Reading from the N-terminus, the 303-residue chain is Biphenyl-2,3-diol 1,2-dioxygenase (303 aa).

VOC domains lie at 5 to 119 and 143 to 264; these read SLGY…IYYG and GLGH…YGWS. Residues His-146, His-210, and Glu-260 each contribute to the Fe cation site. Positions 283–303 are disordered; it reads WGHKSVRDKALRATKHEQQPE. Residues 287–303 show a composition bias toward basic and acidic residues; it reads SVRDKALRATKHEQQPE.

This sequence belongs to the extradiol ring-cleavage dioxygenase family. As to quaternary structure, homooctamer. Fe(2+) serves as cofactor.

It catalyses the reaction biphenyl-2,3-diol + O2 = 2-hydroxy-6-oxo-6-phenylhexa-2,4-dienoate + H(+). It functions in the pathway xenobiotic degradation; biphenyl degradation; 2-hydroxy-2,4-pentadienoate and benzoate from biphenyl: step 3/4. This Metapseudomonas furukawaii (Pseudomonas furukawaii) protein is Biphenyl-2,3-diol 1,2-dioxygenase (bphC).